Here is a 408-residue protein sequence, read N- to C-terminus: ORC1-type DNA replication protein 15 (408 aa).

ATP is bound by residues valine 60–alanine 64, tyrosine 208, and arginine 220.

It belongs to the CDC6/cdc18 family.

In terms of biological role, involved in regulation of DNA replication. The protein is ORC1-type DNA replication protein 15 (cdc6o) of Haloarcula marismortui (strain ATCC 43049 / DSM 3752 / JCM 8966 / VKM B-1809) (Halobacterium marismortui).